A 183-amino-acid chain; its full sequence is COMM domain-containing protein 8 (183 aa).

In terms of domain architecture, COMM spans 116 to 183 (QLQDFDWQVK…AANKVVLQLK (68 aa)).

This sequence belongs to the COMM domain-containing protein 8 family. As to quaternary structure, component of the commander complex consisting of the CCC subcomplex and the retriever subcomplex. Component of the CCC (COMMD/CCDC22/CCDC93) subcomplex consisting of COMMD1, COMMD2, COMMD3, COMMD4, COMMD5, COMMD6, COMMD7, COMMD8, COMMD9, COMMD10, CCDC22 and CCDC93; within the complex forms a heterodimer with COMMD4. Interacts with RELA, RELB, NFKB1/p105. Interacts with CCDC22, CCDC93, SCNN1B, CUL1, CUL2, CUL3, CUL4A, CUL4B, CUL5. As to expression, widely expressed with highest expression in thyroid.

The protein localises to the cytoplasm. It localises to the nucleus. Functionally, scaffold protein in the commander complex that is essential for endosomal recycling of transmembrane cargos; the commander complex is composed of the CCC subcomplex and the retriever subcomplex. May modulate activity of cullin-RING E3 ubiquitin ligase (CRL) complexes. May down-regulate activation of NF-kappa-B. This is COMM domain-containing protein 8 (COMMD8) from Homo sapiens (Human).